A 242-amino-acid chain; its full sequence is ATP synthase subunit 4, mitochondrial (242 aa).

The transit peptide at Met-1–His-35 directs the protein to the mitochondrion.

This sequence belongs to the eukaryotic ATPase B chain family. In terms of assembly, F-type ATPases have 2 components, CF(1) - the catalytic core - and CF(0) - the membrane proton channel. In yeast, the dimeric form of ATP synthase consists of 17 polypeptides: alpha, beta, gamma, delta, epsilon, 4 (B), 5 (OSCP), 6 (A), 8, 9 (C), d, E (Tim11), f, g, h, i/j and k.

It localises to the mitochondrion. It is found in the mitochondrion inner membrane. Mitochondrial membrane ATP synthase (F(1)F(0) ATP synthase or Complex V) produces ATP from ADP in the presence of a proton gradient across the membrane which is generated by electron transport complexes of the respiratory chain. F-type ATPases consist of two structural domains, F(1) - containing the extramembraneous catalytic core, and F(0) - containing the membrane proton channel, linked together by a central stalk and a peripheral stalk. During catalysis, ATP synthesis in the catalytic domain of F(1) is coupled via a rotary mechanism of the central stalk subunits to proton translocation. Part of the complex F(0) domain and the peripheric stalk, which acts as a stator to hold the catalytic alpha(3)beta(3) subcomplex and subunit a/ATP6 static relative to the rotary elements. The chain is ATP synthase subunit 4, mitochondrial (ATP4) from Candida glabrata (strain ATCC 2001 / BCRC 20586 / JCM 3761 / NBRC 0622 / NRRL Y-65 / CBS 138) (Yeast).